The following is a 258-amino-acid chain: Microtubule-associated protein RP/EB family member 1 (258 aa).

The region spanning 14-116 (NLSRHDMLAW…FVQWFKKFFD (103 aa)) is the Calponin-homology (CH) domain. Residues 175–245 (KKAAGDDESA…LYATDEGFVI (71 aa)) form the EB1 C-terminal domain.

The protein belongs to the MAPRE family.

Its subcellular location is the cytoplasm. The protein localises to the cytoskeleton. It localises to the microtubule organizing center. The protein resides in the centrosome. It is found in the golgi apparatus. Its subcellular location is the spindle. The protein localises to the spindle pole. In terms of biological role, plus-end tracking protein (+TIP) that binds to the plus-end of microtubules and regulates the dynamics of the microtubule cytoskeleton. Promotes cytoplasmic microtubule nucleation and elongation. Involved in mitotic spindle positioning by stabilizing microtubules and promoting dynamic connection between astral microtubules and the cortex during mitotic chromosome segregation. This Gallus gallus (Chicken) protein is Microtubule-associated protein RP/EB family member 1 (MAPRE1).